The chain runs to 105 residues: Small ribosomal subunit protein uS10 (105 aa).

It belongs to the universal ribosomal protein uS10 family. Part of the 30S ribosomal subunit.

Functionally, involved in the binding of tRNA to the ribosomes. In Aster yellows witches'-broom phytoplasma (strain AYWB), this protein is Small ribosomal subunit protein uS10.